The sequence spans 451 residues: Signal transduction histidine-protein kinase ArlS (451 aa).

Helical transmembrane passes span 11–31 (IIVT…IIIF) and 156–176 (IIAL…SYVF). Positions 178–231 (TQITKPLVSLSNKMIEIRRDGFQNKLQLNTNYEEIDNLANTFNEMMSQIEESFN) constitute an HAMP domain. In terms of domain architecture, Histidine kinase spans 239–451 (DASHELRTPL…NKGTTFKIIF (213 aa)). The residue at position 242 (H242) is a Phosphohistidine; by autocatalysis.

Autophosphorylated.

Its subcellular location is the cell membrane. The catalysed reaction is ATP + protein L-histidine = ADP + protein N-phospho-L-histidine.. Functionally, member of the two-component regulatory system ArlS/ArlR involved in the regulation of adhesion, autolysis, multidrug resistance and virulence. ArlS probably functions as a sensor protein kinase which is autophosphorylated at a histidine residue and transfers its phosphate group to ArlR. The polypeptide is Signal transduction histidine-protein kinase ArlS (arlS) (Staphylococcus aureus (strain bovine RF122 / ET3-1)).